A 156-amino-acid polypeptide reads, in one-letter code: MNELIGVIRIRGWAATPWYIQDTLSMLRLKNAFNAMIYPKDSSIQGMLNLVSSYVTWGELNDEGLRLLVSKLEISRGKKVNEEYVKDKLNVDFQSFVESIKDGKLRLNKLDEIFSLPIRLHPPKGGFKGKVSRPFRAGGEFGYRGDKINELIRRMV.

Belongs to the universal ribosomal protein uL30 family. In terms of assembly, part of the 50S ribosomal subunit.

This Sulfolobus acidocaldarius (strain ATCC 33909 / DSM 639 / JCM 8929 / NBRC 15157 / NCIMB 11770) protein is Large ribosomal subunit protein uL30.